A 337-amino-acid chain; its full sequence is Nicotinate-nucleotide--dimethylbenzimidazole phosphoribosyltransferase (337 aa).

The active-site Proton acceptor is the glutamate 305.

It belongs to the CobT family.

It catalyses the reaction 5,6-dimethylbenzimidazole + nicotinate beta-D-ribonucleotide = alpha-ribazole 5'-phosphate + nicotinate + H(+). Its pathway is nucleoside biosynthesis; alpha-ribazole biosynthesis; alpha-ribazole from 5,6-dimethylbenzimidazole: step 1/2. Functionally, catalyzes the synthesis of alpha-ribazole-5'-phosphate from nicotinate mononucleotide (NAMN) and 5,6-dimethylbenzimidazole (DMB). The chain is Nicotinate-nucleotide--dimethylbenzimidazole phosphoribosyltransferase from Jannaschia sp. (strain CCS1).